The following is a 692-amino-acid chain: Elongation factor G (692 aa).

Positions 8 to 282 (AKTRNIGIMA…AVIAYLPSPL (275 aa)) constitute a tr-type G domain. GTP contacts are provided by residues 17–24 (AHVDAGKT), 81–85 (DTPGH), and 135–138 (NKMD).

Belongs to the TRAFAC class translation factor GTPase superfamily. Classic translation factor GTPase family. EF-G/EF-2 subfamily.

The protein localises to the cytoplasm. Functionally, catalyzes the GTP-dependent ribosomal translocation step during translation elongation. During this step, the ribosome changes from the pre-translocational (PRE) to the post-translocational (POST) state as the newly formed A-site-bound peptidyl-tRNA and P-site-bound deacylated tRNA move to the P and E sites, respectively. Catalyzes the coordinated movement of the two tRNA molecules, the mRNA and conformational changes in the ribosome. The sequence is that of Elongation factor G from Streptococcus pyogenes serotype M49 (strain NZ131).